A 616-amino-acid polypeptide reads, in one-letter code: Chaperone protein DnaK (616 aa).

A Phosphothreonine; by autocatalysis modification is found at T175. The tract at residues 579–616 is disordered; it reads GGDPSQAGGFDPNAAGGAQQEPHDDNVVDADFKVDDDK. Over residues 599-616 the composition is skewed to basic and acidic residues; it reads EPHDDNVVDADFKVDDDK.

This sequence belongs to the heat shock protein 70 family.

Acts as a chaperone. In Clostridium botulinum (strain Eklund 17B / Type B), this protein is Chaperone protein DnaK.